Here is a 529-residue protein sequence, read N- to C-terminus: Bifunctional purine biosynthesis protein PurH (529 aa).

In terms of domain architecture, MGS-like spans 1–148 (MQPPRPVRRA…KNHKDVAIVV (148 aa)).

Belongs to the PurH family.

It carries out the reaction (6R)-10-formyltetrahydrofolate + 5-amino-1-(5-phospho-beta-D-ribosyl)imidazole-4-carboxamide = 5-formamido-1-(5-phospho-D-ribosyl)imidazole-4-carboxamide + (6S)-5,6,7,8-tetrahydrofolate. The catalysed reaction is IMP + H2O = 5-formamido-1-(5-phospho-D-ribosyl)imidazole-4-carboxamide. Its pathway is purine metabolism; IMP biosynthesis via de novo pathway; 5-formamido-1-(5-phospho-D-ribosyl)imidazole-4-carboxamide from 5-amino-1-(5-phospho-D-ribosyl)imidazole-4-carboxamide (10-formyl THF route): step 1/1. The protein operates within purine metabolism; IMP biosynthesis via de novo pathway; IMP from 5-formamido-1-(5-phospho-D-ribosyl)imidazole-4-carboxamide: step 1/1. The sequence is that of Bifunctional purine biosynthesis protein PurH from Sodalis glossinidius (strain morsitans).